A 976-amino-acid polypeptide reads, in one-letter code: MKLKSVFRSVLKYRKTNLSLLLLITYSIITLLYIFDHERYKLNLPKEDEHPEFNDLLETAWGDLQIITASFHPYTSKENDKVHDYLLKRVLEITGNSSFASVSDDKESERSILFQQQDPFNESSRFSRVTYFESSNILVKLEGKNPEEEGLLLSAHFDSVPTGYGATDDGMGVVSLLANLKYHIKHRPNRTLIFNFNNNEEFGLLGASTYFNHSWSNLTKYVINLEGTGAGGKAVLFRTSDTSTAKIYQQSVKENPFGNSIYQQGFYSRYVRSETDYKIYEENGMRGWDVAFYKPRNLYHTIKDSIQYTSKASLWHMLHTSLQLSAYVASNSLDTADQTPACYFDFIGLKFFVISAKTLFYWNCIFLLVSPVVAIGLYLISRDRMTWKSHSWLSWTRFPLSLAAGIIVQKLFSNDIIRSNPLTFSRNYFWPISAFFTQVIFTSYVLINCSNFFFPCADMKSLSIIELFIILWTILLFTSKLLYSSDYRYTGLYPLSIFFLLSTIAAILRLLALALGMRTRKRLGRECRDHHSNYSSHSQIDMERDGQENLEQPQDQFTSSQDDQASIQDDNVSTTSAGPSHNVDEDHGMDSSSQQHDERVPLLKGSNSMEEGLSTRENSLKLEYTDYAWIIQFLLIVPIPSFILFNSVDVIMDALNHTVQEGSKATFDVLRFGMVGSILMALPILPFFYKVNYITISLTALLFLISASKTLLVHPFTNSNPLKVRFSQNIDLSQGNAASVHVLGREGNFLKPMLQDLPSIKYSSTHINCTSVTNGMELCMYDGMQPNLLSTNGNTNISSMVKVHVLHNNRNSTERSPYEPIVAELLLEVKENRACTLTFESRHQAKSPVREITVYQKKNSAPQKANITKTIKSASGINELQLHKLDFDQETYHIGVQWFPKLLTDGNLEDDKLGTKDELSVSISCYWGEYDSESVVNGTAVRKIPAFDELINYAPLSFSFTNEQKGLVIVKDAIIL.

The Cytoplasmic portion of the chain corresponds to M1–K15. Residues T16–D36 traverse the membrane as a helical segment. Over H37–L359 the chain is Vacuolar. Residues N96 and N121 are each glycosylated (N-linked (GlcNAc...) asparagine). Zn(2+) contacts are provided by H156 and D168. The N-linked (GlcNAc...) asparagine glycan is linked to N189. E200 functions as the Proton acceptor in the catalytic mechanism. A Zn(2+)-binding site is contributed by E201. N212 and N217 each carry an N-linked (GlcNAc...) asparagine glycan. Zn(2+) contacts are provided by E226 and H300. A helical transmembrane segment spans residues F360 to I380. Topologically, residues S381–W392 are cytoplasmic. The chain crosses the membrane as a helical span at residues L393–F412. Residues S413–Y428 are Vacuolar-facing. The helical transmembrane segment at F429–C449 threads the bilayer. At S450–S461 the chain is on the cytoplasmic side. A helical transmembrane segment spans residues L462–L482. Over Y483 to S496 the chain is Vacuolar. A helical transmembrane segment spans residues I497–M517. Over R518 to Y627 the chain is Cytoplasmic. The tract at residues R528–E610 is disordered. The segment covering N549 to T558 has biased composition (polar residues). The segment covering S559–D570 has biased composition (low complexity). Residues N582–P601 are compositionally biased toward basic and acidic residues. The helical transmembrane segment at A628–V648 threads the bilayer. Over D649–D668 the chain is Vacuolar. N656 carries N-linked (GlcNAc...) asparagine glycosylation. A helical membrane pass occupies residues V669–Y689. Residues K690 to N692 are Cytoplasmic-facing. A helical transmembrane segment spans residues Y693–V713. Residues H714–L976 lie on the Vacuolar side of the membrane. N-linked (GlcNAc...) asparagine glycosylation is found at N768, N796, N811, N866, and N937.

It belongs to the peptidase M28 family. Requires Zn(2+) as cofactor.

The protein localises to the vacuole membrane. Functionally, may be involved in vacuolar sorting and osmoregulation. The protein is Vacuolar membrane protease of Saccharomyces cerevisiae (strain YJM789) (Baker's yeast).